We begin with the raw amino-acid sequence, 240 residues long: Ribonuclease PH (240 aa).

Phosphate-binding positions include R87 and 125 to 127 (GTR).

The protein belongs to the RNase PH family. Homohexameric ring arranged as a trimer of dimers.

The catalysed reaction is tRNA(n+1) + phosphate = tRNA(n) + a ribonucleoside 5'-diphosphate. In terms of biological role, phosphorolytic 3'-5' exoribonuclease that plays an important role in tRNA 3'-end maturation. Removes nucleotide residues following the 3'-CCA terminus of tRNAs; can also add nucleotides to the ends of RNA molecules by using nucleoside diphosphates as substrates, but this may not be physiologically important. Probably plays a role in initiation of 16S rRNA degradation (leading to ribosome degradation) during starvation. The chain is Ribonuclease PH from Pseudomonas syringae pv. syringae (strain B728a).